The sequence spans 323 residues: Acetyl esterase (323 aa).

The short motif at 91–93 (HGG) is the Involved in the stabilization of the negatively charged intermediate by the formation of the oxyanion hole element. Catalysis depends on residues S165, D262, and H292.

It belongs to the 'GDXG' lipolytic enzyme family. As to quaternary structure, homodimer. Interacts with MalT and MelA.

The protein localises to the cytoplasm. Functionally, displays esterase activity towards short chain fatty esters (acyl chain length of up to 8 carbons). Able to hydrolyze triacetylglycerol (triacetin) and tributyrylglycerol (tributyrin), but not trioleylglycerol (triolein) or cholesterol oleate. Negatively regulates MalT activity by antagonizing maltotriose binding. Inhibits MelA galactosidase activity. This Salmonella paratyphi A (strain AKU_12601) protein is Acetyl esterase.